Reading from the N-terminus, the 175-residue chain is Alpha-crystallin B chain (175 aa).

Residue Met-1 is modified to N-acetylmethionine. Ser-19 is subject to Phosphoserine. O-linked (GlcNAc) serine glycosylation is present at Ser-41. Phosphoserine occurs at positions 45 and 59. Positions Arg-56–Glu-164 constitute a sHSP domain. Residue His-83 coordinates Zn(2+). N6-acetyllysine; partial is present on Lys-92. 4 residues coordinate Zn(2+): His-104, Glu-106, His-111, and His-119. Positions Asn-146–Lys-175 are disordered. An N6-acetyllysine modification is found at Lys-166. Thr-170 carries an O-linked (GlcNAc) threonine glycan.

Belongs to the small heat shock protein (HSP20) family. In terms of assembly, heteromer composed of three CRYAA and one CRYAB subunits. Aggregates with homologous proteins, including the small heat shock protein HSPB1, to form large heteromeric complexes. Inter-subunit bridging via zinc ions enhances stability, which is crucial as there is no protein turn over in the lens. Interacts with HSPBAP1 and TTN/titin. Interacts with TMEM109; in the cellular response to DNA damage. Interacts with DES; binds rapidly during early stages of DES filament assembly and a reduced binding seen in the later stages. Interacts with TMED10; the interaction mediates the translocation from the cytoplasm into the ERGIC (endoplasmic reticulum-Golgi intermediate compartment) and thereby secretion. Interacts with ATP6V1A and with MTOR, forming a ternary complex. As to expression, lens as well as other tissues. Expressed in myocardial tissue.

It localises to the cytoplasm. Its subcellular location is the nucleus. The protein localises to the secreted. The protein resides in the lysosome. May contribute to the transparency and refractive index of the lens. Has chaperone-like activity, preventing aggregation of various proteins under a wide range of stress conditions. In lens epithelial cells, stabilizes the ATP6V1A protein, preventing its degradation by the proteasome. This is Alpha-crystallin B chain from Homo sapiens (Human).